A 795-amino-acid polypeptide reads, in one-letter code: Phenylalanine--tRNA ligase beta subunit (795 aa).

The tRNA-binding domain occupies 39 to 148 (AGQFHGVVVG…IDAPLGVDLR (110 aa)). Residues 401–476 (PQSATITLRR…RIYGYNNIPD (76 aa)) form the B5 domain. Mg(2+)-binding residues include Asp454, Asp460, Glu463, and Glu464. The 94-residue stretch at 701–794 (SRFPSNRRDI…LKQRFQASLR (94 aa)) folds into the FDX-ACB domain.

It belongs to the phenylalanyl-tRNA synthetase beta subunit family. Type 1 subfamily. Tetramer of two alpha and two beta subunits. It depends on Mg(2+) as a cofactor.

It localises to the cytoplasm. It catalyses the reaction tRNA(Phe) + L-phenylalanine + ATP = L-phenylalanyl-tRNA(Phe) + AMP + diphosphate + H(+). This chain is Phenylalanine--tRNA ligase beta subunit, found in Photorhabdus laumondii subsp. laumondii (strain DSM 15139 / CIP 105565 / TT01) (Photorhabdus luminescens subsp. laumondii).